A 229-amino-acid chain; its full sequence is ATP-dependent Clp protease proteolytic subunit 1 (229 aa).

Ser129 functions as the Nucleophile in the catalytic mechanism. His154 is an active-site residue.

The protein belongs to the peptidase S14 family. Fourteen ClpP subunits assemble into 2 heptameric rings which stack back to back to give a disk-like structure with a central cavity, resembling the structure of eukaryotic proteasomes.

The protein resides in the cytoplasm. It carries out the reaction Hydrolysis of proteins to small peptides in the presence of ATP and magnesium. alpha-casein is the usual test substrate. In the absence of ATP, only oligopeptides shorter than five residues are hydrolyzed (such as succinyl-Leu-Tyr-|-NHMec, and Leu-Tyr-Leu-|-Tyr-Trp, in which cleavage of the -Tyr-|-Leu- and -Tyr-|-Trp bonds also occurs).. Functionally, cleaves peptides in various proteins in a process that requires ATP hydrolysis. Has a chymotrypsin-like activity. Plays a major role in the degradation of misfolded proteins. The polypeptide is ATP-dependent Clp protease proteolytic subunit 1 (Thermosynechococcus vestitus (strain NIES-2133 / IAM M-273 / BP-1)).